The following is a 474-amino-acid chain: ABHD16B (474 aa).

Positions 175–295 (VICCEGNAGF…QSWKGLVVRT (121 aa)) constitute an AB hydrolase-1 domain. Active-site charge relay system residues include Ser248, Asp323, and His423.

It belongs to the AB hydrolase superfamily. ABHD16 family. In terms of tissue distribution, expressed in most tissues, with highest expression found in the testes, skeletal muscle, and brown adipose tissue.

It catalyses the reaction a 1,2-diacyl-sn-glycero-3-phospho-L-serine + H2O = a 2-acyl-sn-glycero-3-phospho-L-serine + a fatty acid + H(+). The catalysed reaction is a 1-acylglycerol + H2O = glycerol + a fatty acid + H(+). It carries out the reaction 1-(9Z-octadecenoyl)-glycerol + H2O = glycerol + (9Z)-octadecenoate + H(+). Its function is as follows. Hydrolyzes the sn-1 position of glycerophospholipids with high specificity towards phosphatidylserine (PS), PS-PLA1 enzyme. Also hydrolyzes the acyl chain of glycerolipids with a preference for the monoacylglycerol (MAG) 1-acylglycerol, MAG lipase. Plays a regulatory role in cellular lipid homeostasis by modulating genes involved in neutral lipid degradation and in phospholipid synthesis and composition. The chain is ABHD16B from Mus musculus (Mouse).